The following is an 80-amino-acid chain: Histone H1.M6.1 (80 aa).

Residues 1–80 form a disordered region; the sequence is MSDAAVPPKK…KAVKKAPKKK (80 aa). The span at 11 to 80 shows a compositional bias: basic residues; it reads ASPKKAAAKK…KAVKKAPKKK (70 aa).

The protein resides in the nucleus. The protein localises to the chromosome. This is Histone H1.M6.1 from Trypanosoma cruzi.